A 525-amino-acid chain; its full sequence is MSGFNFGGTGAPAGGFTFGTAKTATTTPATGFSFSASGTGTGGFNFGTPSQPAATTPSTSLFSLATQTSTTQTPGFNFGTTPASGGTGFSLGISTPKLSLSSTAATPATANTGSFGLGSSTLTNAISGASTSSQGTAPTGFVFGSSTTSAPSTGTTGFSFTSGSASQPGASGFNIGSVGSLAQPTALSGSPFTPATLATTTAGATQPAAATPTAATTSAGSTLFASIAAAPASSSTTVLSLSAPATTAATPTAGTLGFSLKAPGAAPGASTTSTTTTTTTTTTTASTSSSTTTTGFALSLKPLVPAGPSSVAATALPASSTAVGTTTGPAMTYAQLESLINKWSLELEDQERHFLQQATQVNAWDRTLIENGEKITSLHREVEKVKLDQKRLDQELDFILSQQKELEDLLSPLEESVKEQSGTIYLQHADEEREKTYKLAENIDAQLKRMAQDLKDIIEHLNMAGGPADTSDPLQQICKILNAHMDSLQWVDQSSALLQRRVEEASRVCESRRKEQERSLRIAFD.

An N-acetylserine modification is found at Ser-2. 5 tandem repeats follow at residues 6-7 (FG), 46-47 (FG), 78-79 (FG), 115-116 (FG), and 143-144 (FG). The tract at residues 6–144 (FGGTGAPAGG…GTAPTGFVFG (139 aa)) is 5 X 2 AA repeats of F-G. Residues 260–293 (LKAPGAAPGASTTSTTTTTTTTTTTASTSSSTTT) are disordered. Positions 269 to 293 (ASTTSTTTTTTTTTTTASTSSSTTT) are enriched in low complexity. Residues 331 to 461 (MTYAQLESLI…QDLKDIIEHL (131 aa)) are required for centrosome localization. A coiled-coil region spans residues 331-461 (MTYAQLESLI…QDLKDIIEHL (131 aa)). Ser-411 and Ser-421 each carry phosphoserine. O-linked (GlcNAc) serine glycosylation is present at Ser-471.

The protein belongs to the nucleoporin NSP1/NUP62 family. As to quaternary structure, component of the p62 complex, a complex at least composed of NUP62, NUP54, and NUP58. Interacts with NUP88. Interacts with NUTF2. Interacts with HIKESHI. Interacts with OSBPL8. Interacts with CAPG. Interacts with SAS6 and TUBG1 at the centrosome. Interacts with MCM3AP. Post-translationally, the inner channel of the NPC has a different redox environment from the cytoplasm and allows the formation of interchain disulfide bonds between some nucleoporins, the significant increase of these linkages upon oxidative stress reduces the permeability of the NPC.

It localises to the nucleus. Its subcellular location is the nuclear pore complex. It is found in the cytoplasm. The protein localises to the cytoskeleton. The protein resides in the spindle pole. It localises to the nucleus envelope. Its subcellular location is the microtubule organizing center. It is found in the centrosome. Essential component of the nuclear pore complex. The N-terminal is probably involved in nucleocytoplasmic transport. The C-terminal is involved in protein-protein interaction probably via coiled-coil formation, promotes its association with centrosomes and may function in anchorage of p62 to the pore complex. Plays a role in mitotic cell cycle progression by regulating centrosome segregation, centriole maturation and spindle orientation. It might be involved in protein recruitment to the centrosome after nuclear breakdown. The chain is Nuclear pore glycoprotein p62 (Nup62) from Rattus norvegicus (Rat).